The following is a 580-amino-acid chain: 2-succinyl-5-enolpyruvyl-6-hydroxy-3-cyclohexene-1-carboxylate synthase (580 aa).

It belongs to the TPP enzyme family. MenD subfamily. In terms of assembly, homodimer. Mg(2+) serves as cofactor. Mn(2+) is required as a cofactor. Requires thiamine diphosphate as cofactor.

It carries out the reaction isochorismate + 2-oxoglutarate + H(+) = 5-enolpyruvoyl-6-hydroxy-2-succinyl-cyclohex-3-ene-1-carboxylate + CO2. It functions in the pathway quinol/quinone metabolism; 1,4-dihydroxy-2-naphthoate biosynthesis; 1,4-dihydroxy-2-naphthoate from chorismate: step 2/7. Its pathway is quinol/quinone metabolism; menaquinone biosynthesis. Catalyzes the thiamine diphosphate-dependent decarboxylation of 2-oxoglutarate and the subsequent addition of the resulting succinic semialdehyde-thiamine pyrophosphate anion to isochorismate to yield 2-succinyl-5-enolpyruvyl-6-hydroxy-3-cyclohexene-1-carboxylate (SEPHCHC). The polypeptide is 2-succinyl-5-enolpyruvyl-6-hydroxy-3-cyclohexene-1-carboxylate synthase (Listeria innocua serovar 6a (strain ATCC BAA-680 / CLIP 11262)).